The sequence spans 145 residues: Large-conductance mechanosensitive channel (145 aa).

The next 2 helical transmembrane spans lie at 14–34 and 83–103; these read VIDLAVGIIIGAAFTAIVNSL and GAFLSAVINFLIIAWAVFLLV.

The protein belongs to the MscL family. In terms of assembly, homopentamer.

Its subcellular location is the cell inner membrane. In terms of biological role, channel that opens in response to stretch forces in the membrane lipid bilayer. May participate in the regulation of osmotic pressure changes within the cell. In Paracoccus denitrificans (strain Pd 1222), this protein is Large-conductance mechanosensitive channel.